The sequence spans 448 residues: tRNA modification GTPase MnmE (448 aa).

Arg-25, Glu-83, and Lys-122 together coordinate (6S)-5-formyl-5,6,7,8-tetrahydrofolate. The TrmE-type G domain occupies 218 to 372 (GFKVAIIGKP…LTQKLQKLLD (155 aa)). Asn-228 provides a ligand contact to K(+). Residues 228 to 233 (NTGKSS), 247 to 253 (SDIAGTT), and 272 to 275 (DTAG) each bind GTP. Ser-232 serves as a coordination point for Mg(2+). K(+)-binding residues include Ser-247, Ile-249, and Thr-252. Thr-253 contacts Mg(2+). Lys-448 serves as a coordination point for (6S)-5-formyl-5,6,7,8-tetrahydrofolate.

The protein belongs to the TRAFAC class TrmE-Era-EngA-EngB-Septin-like GTPase superfamily. TrmE GTPase family. As to quaternary structure, homodimer. Heterotetramer of two MnmE and two MnmG subunits. Requires K(+) as cofactor.

The protein localises to the cytoplasm. In terms of biological role, exhibits a very high intrinsic GTPase hydrolysis rate. Involved in the addition of a carboxymethylaminomethyl (cmnm) group at the wobble position (U34) of certain tRNAs, forming tRNA-cmnm(5)s(2)U34. The sequence is that of tRNA modification GTPase MnmE from Nitratiruptor sp. (strain SB155-2).